The sequence spans 687 residues: Calcium-binding protein SP84 (687 aa).

The N-terminal stretch at 1–19 is a signal peptide; that stretch reads MMRAIYLLVVVCWAAAANA. EF-hand domains follow at residues 152–187, 257–292, 406–441, 476–511, and 579–614; these read LESDDITKFYKHLDNDKDNELKTEEVLKIQHTHKNK, LTEIDISLLYRSVDTNNDNKIIIDELKAFTGITDDV, KTEATVTRYMVEADIDKDSFICLEEFDEYMDIPHMV, IENAAFDTWFNHYDTNHNNKIEKEADGLLAKFNNDA, and MTERDIEDLFDELDHNDDHELTQQDFPDCWNDVKDL. Positions 592, 594, 596, 598, and 603 each coordinate Ca(2+).

Expressed in salivary glands where expression is strongest in type III cells in the posterior lobe of the principal glands (at protein level). Not expressed in midgut, Malpighian tubules or epidermis.

Its subcellular location is the secreted. In terms of biological role, binds calcium. During feeding of the phloem sap, protein is injected into sieve tubes of rice plants. This process may suppress the sieve-element clogging and facilitate continuous ingestion from sieve tubes. This is Calcium-binding protein SP84 from Nephotettix cincticeps (Green rice leafhopper).